The sequence spans 256 residues: Thiazole synthase (256 aa).

K97 (schiff-base intermediate with DXP) is an active-site residue. Residues G158, 184–185 (AG), and 206–207 (NT) each bind 1-deoxy-D-xylulose 5-phosphate.

The protein belongs to the ThiG family. In terms of assembly, homotetramer. Forms heterodimers with either ThiH or ThiS.

It localises to the cytoplasm. It carries out the reaction [ThiS sulfur-carrier protein]-C-terminal-Gly-aminoethanethioate + 2-iminoacetate + 1-deoxy-D-xylulose 5-phosphate = [ThiS sulfur-carrier protein]-C-terminal Gly-Gly + 2-[(2R,5Z)-2-carboxy-4-methylthiazol-5(2H)-ylidene]ethyl phosphate + 2 H2O + H(+). It functions in the pathway cofactor biosynthesis; thiamine diphosphate biosynthesis. In terms of biological role, catalyzes the rearrangement of 1-deoxy-D-xylulose 5-phosphate (DXP) to produce the thiazole phosphate moiety of thiamine. Sulfur is provided by the thiocarboxylate moiety of the carrier protein ThiS. In vitro, sulfur can be provided by H(2)S. This chain is Thiazole synthase, found in Flavobacterium psychrophilum (strain ATCC 49511 / DSM 21280 / CIP 103535 / JIP02/86).